Here is a 677-residue protein sequence, read N- to C-terminus: Zinc finger and BTB domain-containing protein 5 (677 aa).

Residues 24 to 93 (CDCVIVVGNR…MYTSTLMLGE (70 aa)) enclose the BTB domain. The span at 158-181 (LNSSQNGEEQPAPMSSSMRSNLDQ) shows a compositional bias: polar residues. Disordered stretches follow at residues 158 to 252 (LNSS…MTDN) and 287 to 312 (SMAS…SFQC). A Phosphoserine modification is found at Ser234. Residue Lys239 forms a Glycyl lysine isopeptide (Lys-Gly) (interchain with G-Cter in SUMO2) linkage. Residues 287 to 300 (SMASRATQVETSFD) show a composition bias toward polar residues. Residues Lys322 and Lys330 each participate in a glycyl lysine isopeptide (Lys-Gly) (interchain with G-Cter in SUMO2) cross-link. Residues 331 to 387 (SEPLSSPEPQDEVSDVTSQAEGSESVEVEGVVVSAEKIDLSPESSDRSFSDPQSSTD) form a disordered region. Positions 350–365 (AEGSESVEVEGVVVSA) are enriched in low complexity. The span at 366–379 (EKIDLSPESSDRSF) shows a compositional bias: basic and acidic residues. The residue at position 371 (Ser371) is a Phosphoserine. Glycyl lysine isopeptide (Lys-Gly) (interchain with G-Cter in SUMO2) cross-links involve residues Lys404 and Lys415. Residues 447 to 474 (LLSPEAGPAGGPSSAPGSHVENPFSEPA) form a disordered region. The segment covering 449 to 464 (SPEAGPAGGPSSAPGS) has biased composition (low complexity). Lys541 is covalently cross-linked (Glycyl lysine isopeptide (Lys-Gly) (interchain with G-Cter in SUMO2)). Over residues 552–576 (QIPENSTSSQLMMNGATSSFENGHP) the composition is skewed to polar residues. The segment at 552-585 (QIPENSTSSQLMMNGATSSFENGHPSQPGPPQLT) is disordered. Glycyl lysine isopeptide (Lys-Gly) (interchain with G-Cter in SUMO2) cross-links involve residues Lys594 and Lys597. A C2H2-type 1 zinc finger spans residues 613–635 (YACKICCKTFLTLTDCKKHIRVH). The C2H2-type 2; atypical zinc finger occupies 641-664 (YACLKCGKRFSQSSHLYKHSKTTC). Glycyl lysine isopeptide (Lys-Gly) (interchain with G-Cter in SUMO2) cross-links involve residues Lys645 and Lys658.

The protein localises to the nucleus. Functionally, may be involved in transcriptional regulation. In Homo sapiens (Human), this protein is Zinc finger and BTB domain-containing protein 5 (ZBTB5).